The primary structure comprises 543 residues: Chaperonin GroEL 1 (543 aa).

ATP-binding positions include 30-33 (TLGP), lysine 51, 87-91 (DGTTT), glycine 415, and aspartate 496.

It belongs to the chaperonin (HSP60) family. Forms a cylinder of 14 subunits composed of two heptameric rings stacked back-to-back. Interacts with the co-chaperonin GroES.

The protein resides in the cytoplasm. It catalyses the reaction ATP + H2O + a folded polypeptide = ADP + phosphate + an unfolded polypeptide.. Its function is as follows. Together with its co-chaperonin GroES, plays an essential role in assisting protein folding. The GroEL-GroES system forms a nano-cage that allows encapsulation of the non-native substrate proteins and provides a physical environment optimized to promote and accelerate protein folding. This chain is Chaperonin GroEL 1, found in Mesorhizobium japonicum (strain LMG 29417 / CECT 9101 / MAFF 303099) (Mesorhizobium loti (strain MAFF 303099)).